A 287-amino-acid polypeptide reads, in one-letter code: 2-dehydro-3-deoxyphosphooctonate aldolase (287 aa).

It belongs to the KdsA family.

The protein localises to the cytoplasm. The catalysed reaction is D-arabinose 5-phosphate + phosphoenolpyruvate + H2O = 3-deoxy-alpha-D-manno-2-octulosonate-8-phosphate + phosphate. The protein operates within carbohydrate biosynthesis; 3-deoxy-D-manno-octulosonate biosynthesis; 3-deoxy-D-manno-octulosonate from D-ribulose 5-phosphate: step 2/3. It participates in bacterial outer membrane biogenesis; lipopolysaccharide biosynthesis. In Caulobacter vibrioides (strain ATCC 19089 / CIP 103742 / CB 15) (Caulobacter crescentus), this protein is 2-dehydro-3-deoxyphosphooctonate aldolase.